The sequence spans 351 residues: Phosphoribosylformylglycinamidine cyclo-ligase (351 aa).

This sequence belongs to the AIR synthase family.

The protein localises to the cytoplasm. The catalysed reaction is 2-formamido-N(1)-(5-O-phospho-beta-D-ribosyl)acetamidine + ATP = 5-amino-1-(5-phospho-beta-D-ribosyl)imidazole + ADP + phosphate + H(+). Its pathway is purine metabolism; IMP biosynthesis via de novo pathway; 5-amino-1-(5-phospho-D-ribosyl)imidazole from N(2)-formyl-N(1)-(5-phospho-D-ribosyl)glycinamide: step 2/2. The sequence is that of Phosphoribosylformylglycinamidine cyclo-ligase from Burkholderia cenocepacia (strain ATCC BAA-245 / DSM 16553 / LMG 16656 / NCTC 13227 / J2315 / CF5610) (Burkholderia cepacia (strain J2315)).